The primary structure comprises 428 residues: Chaperone SurA (428 aa).

Positions 1 to 20 are cleaved as a signal peptide; that stretch reads MKNWKTLLLGIAMIANTSFA. PpiC domains are found at residues 171–272 and 282–382; these read STEL…KVND and VTEV…ELLD.

It localises to the periplasm. The enzyme catalyses [protein]-peptidylproline (omega=180) = [protein]-peptidylproline (omega=0). In terms of biological role, chaperone involved in the correct folding and assembly of outer membrane proteins. Recognizes specific patterns of aromatic residues and the orientation of their side chains, which are found more frequently in integral outer membrane proteins. May act in both early periplasmic and late outer membrane-associated steps of protein maturation. In Salmonella choleraesuis (strain SC-B67), this protein is Chaperone SurA.